Here is a 682-residue protein sequence, read N- to C-terminus: Glucan endo-1,3-beta-glucosidase A1 (682 aa).

Residues 1–38 (MKPSHFTEKRFMKKVLGLFLVVVMLASVGVLPTSKVQA) form the signal peptide. Residues 391 to 682 (YTFIGNPNAP…VDYVRVYKEQ (292 aa)) form the GH16 domain. The Nucleophile role is filled by E552. E557 serves as the catalytic Proton donor.

Belongs to the glycosyl hydrolase 16 family.

It localises to the secreted. The catalysed reaction is Hydrolysis of (1-&gt;3)-beta-D-glucosidic linkages in (1-&gt;3)-beta-D-glucans.. Lysis of cellular walls containing beta-1,3-glucans. Implicated in the defense against fungal pathogens. The polypeptide is Glucan endo-1,3-beta-glucosidase A1 (glcA) (Niallia circulans (Bacillus circulans)).